The sequence spans 502 residues: 4,4'-diapophytoene desaturase (4,4'-diaponeurosporene-forming) (502 aa).

Residue 5 to 17 (VIGAGVTGLAAAA) participates in FAD binding.

Belongs to the carotenoid/retinoid oxidoreductase family. CrtN subfamily.

The enzyme catalyses 15-cis-4,4'-diapophytoene + 3 FAD + 3 H(+) = all-trans-4,4'-diaponeurosporene + 3 FADH2. The protein operates within carotenoid biosynthesis; staphyloxanthin biosynthesis; staphyloxanthin from farnesyl diphosphate: step 2/5. Functionally, involved in the biosynthesis of the yellow-orange carotenoid staphyloxanthin, which plays a role in the virulence via its protective function against oxidative stress. Catalyzes three successive dehydrogenation reactions that lead to the introduction of three double bonds into 4,4'-diapophytoene (dehydrosqualene), with 4,4'-diapophytofluene and 4,4'-diapo-zeta-carotene as intermediates, and 4,4'-diaponeurosporene (the major deep-yellow pigment in staphylococci strains) as the end product. This is 4,4'-diapophytoene desaturase (4,4'-diaponeurosporene-forming) from Staphylococcus aureus (strain bovine RF122 / ET3-1).